The primary structure comprises 401 residues: Riboflavin biosynthesis protein RibBA (401 aa).

The DHBP synthase stretch occupies residues 1 to 203; sequence MTDFQFSKVE…IQQLQEYRRK (203 aa). D-ribulose 5-phosphate is bound by residues 30-31, Asp-35, 142-146, and Glu-166; these read RE and RNGHT. Glu-31 contacts Mg(2+). His-145 is a Mg(2+) binding site. Residues 204-401 form a GTP cyclohydrolase II region; sequence HDSLVKQISV…QIKMGHMFNF (198 aa). Position 254–258 (254–258) interacts with GTP; sequence RIHSE. Positions 259, 270, and 272 each coordinate Zn(2+). GTP contacts are provided by residues Gln-275, 297–299, and Thr-319; that span reads EGR. Asp-331 (proton acceptor; for GTP cyclohydrolase activity) is an active-site residue. Residue Arg-333 is the Nucleophile; for GTP cyclohydrolase activity of the active site. 2 residues coordinate GTP: Thr-354 and Lys-359.

The protein in the N-terminal section; belongs to the DHBP synthase family. In the C-terminal section; belongs to the GTP cyclohydrolase II family. Mg(2+) serves as cofactor. It depends on Mn(2+) as a cofactor. Requires Zn(2+) as cofactor.

It carries out the reaction D-ribulose 5-phosphate = (2S)-2-hydroxy-3-oxobutyl phosphate + formate + H(+). The enzyme catalyses GTP + 4 H2O = 2,5-diamino-6-hydroxy-4-(5-phosphoribosylamino)-pyrimidine + formate + 2 phosphate + 3 H(+). Its pathway is cofactor biosynthesis; riboflavin biosynthesis; 2-hydroxy-3-oxobutyl phosphate from D-ribulose 5-phosphate: step 1/1. It functions in the pathway cofactor biosynthesis; riboflavin biosynthesis; 5-amino-6-(D-ribitylamino)uracil from GTP: step 1/4. Its function is as follows. Catalyzes the conversion of D-ribulose 5-phosphate to formate and 3,4-dihydroxy-2-butanone 4-phosphate. Catalyzes the conversion of GTP to 2,5-diamino-6-ribosylamino-4(3H)-pyrimidinone 5'-phosphate (DARP), formate and pyrophosphate. This is Riboflavin biosynthesis protein RibBA from Actinobacillus pleuropneumoniae serotype 3 (strain JL03).